Reading from the N-terminus, the 76-residue chain is Small ribosomal subunit protein uS17 (76 aa).

The protein belongs to the universal ribosomal protein uS17 family. In terms of assembly, part of the 30S ribosomal subunit.

Its function is as follows. One of the primary rRNA binding proteins, it binds specifically to the 5'-end of 16S ribosomal RNA. This is Small ribosomal subunit protein uS17 from Dinoroseobacter shibae (strain DSM 16493 / NCIMB 14021 / DFL 12).